We begin with the raw amino-acid sequence, 461 residues long: Major capsid protein (461 aa).

The span at 1-18 shows a compositional bias: polar residues; it reads MSTPTISADTTAQNATST. The interval 1–22 is disordered; sequence MSTPTISADTTAQNATSTEVRE.

The protein resides in the virion. Major protein of the capsid. In Spodoptera frugiperda ascovirus 1a (SfAV-1a), this protein is Major capsid protein (MCP).